The chain runs to 404 residues: Glucose-1-phosphate adenylyltransferase (404 aa).

Alpha-D-glucose 1-phosphate is bound by residues Tyr-99, Gly-164, 179 to 180, and Ser-197; that span reads EK.

This sequence belongs to the bacterial/plant glucose-1-phosphate adenylyltransferase family. Homotetramer.

It carries out the reaction alpha-D-glucose 1-phosphate + ATP + H(+) = ADP-alpha-D-glucose + diphosphate. It functions in the pathway glycan biosynthesis; glycogen biosynthesis. In terms of biological role, involved in the biosynthesis of ADP-glucose, a building block required for the elongation reactions to produce glycogen. Catalyzes the reaction between ATP and alpha-D-glucose 1-phosphate (G1P) to produce pyrophosphate and ADP-Glc. The sequence is that of Glucose-1-phosphate adenylyltransferase from Rhodococcus jostii (strain RHA1).